The following is a 319-amino-acid chain: COP9 signalosome complex subunit 6 (319 aa).

One can recognise an MPN domain in the interval 33–166; it reads VALHPLVILN…VSVYESVIDI (134 aa).

This sequence belongs to the peptidase M67A family. CSN6 subfamily. In terms of assembly, component of the CSN complex, probably composed of cops1, cops2, cops3, cops4, cops5, cops6, cops7, cops8 and cops9.

The protein resides in the cytoplasm. It localises to the nucleus. Component of the COP9 signalosome complex (CSN), a complex involved in various cellular and developmental processes. The CSN complex is an essential regulator of the ubiquitin (Ubl) conjugation pathway by mediating the deneddylation of the cullin subunits of E3 ligase complexes, leading to modify the Ubl ligase activity. This chain is COP9 signalosome complex subunit 6 (cops6), found in Xenopus tropicalis (Western clawed frog).